The sequence spans 767 residues: RNA cytosine C(5)-methyltransferase NSUN2 (767 aa).

Residues 1-36 (MGRRSRGRRLQQQQRPEDAEDGAEGGGKRGEAGWEG) are disordered. A Glycyl lysine isopeptide (Lys-Gly) (interchain with G-Cter in SUMO2) cross-link involves residue Lys46. Residue Ser139 is modified to Phosphoserine; by AURKB. S-adenosyl-L-methionine is bound by residues 184–190 (CAAPGSK), Asp215, Asp242, and Asp268. Residue Cys321 is the Nucleophile of the active site. The segment at 436–481 (NKRQPKLQGKSAETRESTQLSPADLTEGKPTDPSKLESPSFTGTGD) is disordered. Residue Ser456 is modified to Phosphoserine. The segment covering 461–470 (TEGKPTDPSK) has biased composition (basic and acidic residues). Glycyl lysine isopeptide (Lys-Gly) (interchain with G-Cter in SUMO2) cross-links involve residues Lys464 and Lys470. The residue at position 473 (Ser473) is a Phosphoserine. Residues Lys511 and Lys516 each participate in a glycyl lysine isopeptide (Lys-Gly) (interchain with G-Cter in SUMO2) cross-link. Position 586 is an N6-acetyllysine; alternate (Lys586). Lys586 bears the N6-malonyllysine; alternate mark. Lys586 is covalently cross-linked (Glycyl lysine isopeptide (Lys-Gly) (interchain with G-Cter in SUMO2); alternate). At Ser593 the chain carries Phosphoserine. Glycyl lysine isopeptide (Lys-Gly) (interchain with G-Cter in SUMO2) cross-links involve residues Lys640, Lys654, and Lys660. A Phosphothreonine modification is found at Thr718. Positions 719 to 730 (NESAASTGQPDN) are enriched in polar residues. The interval 719–767 (NESAASTGQPDNDVTEGQRAGEPNSPDAEEANSPDVTAGCDPAGVHPPR) is disordered. Phosphoserine is present on residues Ser724, Ser743, and Ser751.

It belongs to the class I-like SAM-binding methyltransferase superfamily. RsmB/NOP family. TRM4 subfamily. In terms of assembly, interacts with NPM1 and NCL during interphase; interaction is disrupted following phosphorylation at Ser-139. Post-translationally, phosphorylated at Ser-139 by AURKB during mitosis, leading to abolish methyltransferase activity and the interaction with NPM1. In terms of tissue distribution, expressed in adult and fetal brain and in lymphoblastoid cells.

Its subcellular location is the nucleus. The protein resides in the nucleolus. It localises to the cytoplasm. It is found in the mitochondrion. The protein localises to the cytoskeleton. Its subcellular location is the spindle. The protein resides in the secreted. It localises to the extracellular exosome. The catalysed reaction is cytidine(48) in tRNA + S-adenosyl-L-methionine = 5-methylcytidine(48) in tRNA + S-adenosyl-L-homocysteine + H(+). It catalyses the reaction cytidine(49) in tRNA + S-adenosyl-L-methionine = 5-methylcytidine(49) in tRNA + S-adenosyl-L-homocysteine + H(+). The enzyme catalyses cytidine(50) in tRNA + S-adenosyl-L-methionine = 5-methylcytidine(50) in tRNA + S-adenosyl-L-homocysteine + H(+). It carries out the reaction cytidine(34) in tRNA precursor + S-adenosyl-L-methionine = 5-methylcytidine(34) in tRNA precursor + S-adenosyl-L-homocysteine + H(+). The catalysed reaction is a cytidine in mRNA + S-adenosyl-L-methionine = a 5-methylcytidine in mRNA + S-adenosyl-L-homocysteine + H(+). Its activity is regulated as follows. Inhibited by magnesium ions. RNA cytosine C(5)-methyltransferase that methylates cytosine to 5-methylcytosine (m5C) in various RNAs, such as tRNAs, mRNAs and some long non-coding RNAs (lncRNAs). Involved in various processes, such as epidermal stem cell differentiation, testis differentiation and maternal to zygotic transition during early development: acts by increasing protein synthesis; cytosine C(5)-methylation promoting tRNA stability and preventing mRNA decay. Methylates cytosine to 5-methylcytosine (m5C) at positions 34 and 48 of intron-containing tRNA(Leu)(CAA) precursors, and at positions 48, 49 and 50 of tRNA(Gly)(GCC) precursors. tRNA methylation is required generation of RNA fragments derived from tRNAs (tRFs). Also mediates C(5)-methylation of mitochondrial tRNAs. Catalyzes cytosine C(5)-methylation of mRNAs, leading to stabilize them and prevent mRNA decay: mRNA stabilization involves YBX1 that specifically recognizes and binds m5C-modified transcripts. Cytosine C(5)-methylation of mRNAs also regulates mRNA export: methylated transcripts are specifically recognized by THOC4/ALYREF, which mediates mRNA nucleo-cytoplasmic shuttling. Also mediates cytosine C(5)-methylation of non-coding RNAs, such as vault RNAs (vtRNAs), promoting their processing into regulatory small RNAs. Cytosine C(5)-methylation of vtRNA VTRNA1.1 promotes its processing into small-vault RNA4 (svRNA4) and regulates epidermal differentiation. May act downstream of Myc to regulate epidermal cell growth and proliferation. Required for proper spindle assembly and chromosome segregation, independently of its methyltransferase activity. This is RNA cytosine C(5)-methyltransferase NSUN2 from Homo sapiens (Human).